The chain runs to 219 residues: Elongation factor Ts (219 aa).

Residues 82 to 85 (TDFV) form an involved in Mg(2+) ion dislocation from EF-Tu region.

The protein belongs to the EF-Ts family.

It is found in the cytoplasm. Associates with the EF-Tu.GDP complex and induces the exchange of GDP to GTP. It remains bound to the aminoacyl-tRNA.EF-Tu.GTP complex up to the GTP hydrolysis stage on the ribosome. This chain is Elongation factor Ts, found in Anaeromyxobacter dehalogenans (strain 2CP-1 / ATCC BAA-258).